The sequence spans 420 residues: Light-independent protochlorophyllide reductase subunit N (420 aa).

Residues cysteine 21, cysteine 46, and cysteine 103 each contribute to the [4Fe-4S] cluster site.

This sequence belongs to the BchN/ChlN family. In terms of assembly, protochlorophyllide reductase is composed of three subunits; BchL, BchN and BchB. Forms a heterotetramer of two BchB and two BchN subunits. [4Fe-4S] cluster serves as cofactor.

It carries out the reaction chlorophyllide a + oxidized 2[4Fe-4S]-[ferredoxin] + 2 ADP + 2 phosphate = protochlorophyllide a + reduced 2[4Fe-4S]-[ferredoxin] + 2 ATP + 2 H2O. It participates in porphyrin-containing compound metabolism; bacteriochlorophyll biosynthesis (light-independent). Functionally, component of the dark-operative protochlorophyllide reductase (DPOR) that uses Mg-ATP and reduced ferredoxin to reduce ring D of protochlorophyllide (Pchlide) to form chlorophyllide a (Chlide). This reaction is light-independent. The NB-protein (BchN-BchB) is the catalytic component of the complex. The polypeptide is Light-independent protochlorophyllide reductase subunit N (Chlorobium phaeobacteroides (strain DSM 266 / SMG 266 / 2430)).